Consider the following 464-residue polypeptide: tRNA modification GTPase MnmE (464 aa).

Residues arginine 25, glutamate 87, and lysine 130 each coordinate (6S)-5-formyl-5,6,7,8-tetrahydrofolate. Residues 226-386 (GLSVVLAGQP…LRAELLRIAG (161 aa)) enclose the TrmE-type G domain. Residue asparagine 236 participates in K(+) binding. GTP-binding positions include 236-241 (NVGKSS), 255-261 (TPIAGTT), and 280-283 (DTAG). Residue serine 240 coordinates Mg(2+). Threonine 255, isoleucine 257, and threonine 260 together coordinate K(+). Mg(2+) is bound at residue threonine 261. Lysine 464 is a (6S)-5-formyl-5,6,7,8-tetrahydrofolate binding site.

It belongs to the TRAFAC class TrmE-Era-EngA-EngB-Septin-like GTPase superfamily. TrmE GTPase family. As to quaternary structure, homodimer. Heterotetramer of two MnmE and two MnmG subunits. Requires K(+) as cofactor.

It localises to the cytoplasm. In terms of biological role, exhibits a very high intrinsic GTPase hydrolysis rate. Involved in the addition of a carboxymethylaminomethyl (cmnm) group at the wobble position (U34) of certain tRNAs, forming tRNA-cmnm(5)s(2)U34. This is tRNA modification GTPase MnmE from Burkholderia orbicola (strain AU 1054).